The sequence spans 518 residues: 4-trimethylaminobutyraldehyde dehydrogenase B (518 aa).

NAD(+)-binding positions include K204 and 256 to 260 (GSVPT). E278 serves as the catalytic Proton acceptor. Catalysis depends on C312, which acts as the Nucleophile. Residue E415 coordinates NAD(+).

This sequence belongs to the aldehyde dehydrogenase family. In terms of assembly, homotetramer.

The protein resides in the cytoplasm. It is found in the cytosol. It catalyses the reaction 4-(trimethylamino)butanal + NAD(+) + H2O = 4-(trimethylamino)butanoate + NADH + 2 H(+). It carries out the reaction an aldehyde + NAD(+) + H2O = a carboxylate + NADH + 2 H(+). It functions in the pathway amine and polyamine biosynthesis; carnitine biosynthesis. Converts gamma-trimethylaminobutyraldehyde into gamma-butyrobetaine with high efficiency (in vitro). Can catalyze the irreversible oxidation of a broad range of aldehydes to the corresponding acids in an NAD-dependent reaction, but with low efficiency. This chain is 4-trimethylaminobutyraldehyde dehydrogenase B (aldh9a1b), found in Danio rerio (Zebrafish).